Consider the following 149-residue polypeptide: Calmodulin (149 aa).

EF-hand domains follow at residues 8-43 (EQIS…LGQN), 44-79 (PTEA…KMQD), 81-116 (DSEE…LGEK), and 117-149 (LTDE…MMSK). Residues aspartate 21, aspartate 23, aspartate 25, threonine 27, glutamate 32, aspartate 57, aspartate 59, serine 61, threonine 63, glutamate 68, aspartate 94, aspartate 96, asparagine 98, and glutamate 105 each coordinate Ca(2+). Lysine 116 bears the N6,N6,N6-trimethyllysine mark. 5 residues coordinate Ca(2+): aspartate 130, aspartate 132, aspartate 134, glutamine 136, and glutamate 141.

This sequence belongs to the calmodulin family.

Functionally, calmodulin mediates the control of a large number of enzymes, ion channels and other proteins by Ca(2+). Among the enzymes to be stimulated by the calmodulin-Ca(2+) complex are a number of protein kinases and phosphatases. The protein is Calmodulin of Trypanosoma brucei brucei.